The primary structure comprises 297 residues: UDP-N-acetylenolpyruvoylglucosamine reductase (297 aa).

One can recognise an FAD-binding PCMH-type domain in the interval 22-195 (RVGGPAQYYA…LAGRFRLHRA (174 aa)). R169 is an active-site residue. S223 acts as the Proton donor in catalysis. E293 is a catalytic residue.

The protein belongs to the MurB family. FAD serves as cofactor.

The protein localises to the cytoplasm. The catalysed reaction is UDP-N-acetyl-alpha-D-muramate + NADP(+) = UDP-N-acetyl-3-O-(1-carboxyvinyl)-alpha-D-glucosamine + NADPH + H(+). It functions in the pathway cell wall biogenesis; peptidoglycan biosynthesis. Functionally, cell wall formation. This is UDP-N-acetylenolpyruvoylglucosamine reductase from Chloroflexus aggregans (strain MD-66 / DSM 9485).